The following is a 305-amino-acid chain: UDP-3-O-acyl-N-acetylglucosamine deacetylase (305 aa).

Residues H78, H237, and D241 each contribute to the Zn(2+) site. Catalysis depends on H264, which acts as the Proton donor.

It belongs to the LpxC family. Zn(2+) is required as a cofactor.

The catalysed reaction is a UDP-3-O-[(3R)-3-hydroxyacyl]-N-acetyl-alpha-D-glucosamine + H2O = a UDP-3-O-[(3R)-3-hydroxyacyl]-alpha-D-glucosamine + acetate. It functions in the pathway glycolipid biosynthesis; lipid IV(A) biosynthesis; lipid IV(A) from (3R)-3-hydroxytetradecanoyl-[acyl-carrier-protein] and UDP-N-acetyl-alpha-D-glucosamine: step 2/6. Functionally, catalyzes the hydrolysis of UDP-3-O-myristoyl-N-acetylglucosamine to form UDP-3-O-myristoylglucosamine and acetate, the committed step in lipid A biosynthesis. In Burkholderia cenocepacia (strain HI2424), this protein is UDP-3-O-acyl-N-acetylglucosamine deacetylase.